The chain runs to 192 residues: Cytochrome c4 (192 aa).

Cytochrome c domains lie at 12–90 and 99–191; these read GDPQ…ATQP and ELAS…QGLS. Cys-25, Cys-28, His-29, Cys-120, Cys-123, and His-124 together coordinate heme c.

In terms of processing, binds 2 heme c groups covalently per subunit.

The protein localises to the periplasm. Functionally, diheme, high potential cytochrome c believed to be an intermediate electron donor in an anaerobic electron transport chain. The sequence is that of Cytochrome c4 from Thiocapsa roseopersicina.